We begin with the raw amino-acid sequence, 383 residues long: uncharacterized protein (383 aa).

Belongs to the peptidase M20 family.

This is an uncharacterized protein from Staphylococcus haemolyticus (strain JCSC1435).